The sequence spans 566 residues: MKAILLVLLCAFAATNADTLCIGYHANNSTDTVDTVLEKNVTVTHSVNLLEDSHNGKLCRLGGIAPLQLGKCNIAGXXLGNPECDLLLTVSSWSYIVETSNSDNGTCYPGDFIDYEELREQLSSVSSFEKFEIFPKTSSWPNHETTRGVTAACPYAGASSFYRNLLWLVKKENSYPKLSKSYVNNKGKEVLVLWGVHHPPTSTDQQSLYQNADAYVSVGSSKYDRRFTPEIAARPKVRGQAGRMNYYWTLLEPGDTITFEATGNLVAPRYAFALNRGSESGIITSDAPVHDCDTKCQTPHGAINSSLPFQNIHPVTIGECPKYVKSTKLRMVTGLRNIPSIQSRGLFGAIAGFIEGGWTGLIDGWYGYHHQNGQGSGYAADQKSTQNAIDGITNKVNSVIEKMNTQFTVVGKEFNNLERRIKNLNKKVDDGFLDVWTYNAEMLVLLENERTLDFHDSNVKNLYEKARSQLRNNAKEIGNGCFEFYHKCDDACMESVRNGTYDYPKYSEESKLNREEIDGVKLESMMVYQILAIYSTVASSLVLLVSLGAISFWMCSNGSLQCRICI.

The first 17 residues, 1–17 (MKAILLVLLCAFAATNA), serve as a signal peptide directing secretion. The Extracellular segment spans residues 18–529 (DTLCIGYHAN…VKLESMMVYQ (512 aa)). Intrachain disulfides connect Cys21-Cys481, Cys59-Cys292, Cys72-Cys84, Cys107-Cys153, Cys296-Cys320, and Cys488-Cys492. N-linked (GlcNAc...) asparagine; by host glycosylation is found at Asn27, Asn28, and Asn40. Asn104 is a glycosylation site (N-linked (GlcNAc...) asparagine; by host). The N-linked (GlcNAc...) asparagine; by host glycan is linked to Asn304. Asn498 is a glycosylation site (N-linked (GlcNAc...) asparagine; by host). A helical membrane pass occupies residues 530–550 (ILAIYSTVASSLVLLVSLGAI). Topologically, residues 551–566 (SFWMCSNGSLQCRICI) are cytoplasmic. 3 S-palmitoyl cysteine; by host lipidation sites follow: Cys555, Cys562, and Cys565.

The protein belongs to the influenza viruses hemagglutinin family. Homotrimer of disulfide-linked HA1-HA2. Interacts with human CACNA1C. In terms of processing, palmitoylated. In natural infection, inactive HA is matured into HA1 and HA2 outside the cell by one or more trypsin-like, arginine-specific endoprotease secreted by the bronchial epithelial cells. One identified protease that may be involved in this process is secreted in lungs by club cells.

The protein localises to the virion membrane. It localises to the host apical cell membrane. Its function is as follows. Binds to sialic acid-containing receptors on the cell surface, bringing about the attachment of the virus particle to the cell. This attachment induces virion internalization either through clathrin-dependent endocytosis or through clathrin- and caveolin-independent pathway. Plays a major role in the determination of host range restriction and virulence. Class I viral fusion protein. Responsible for penetration of the virus into the cell cytoplasm by mediating the fusion of the membrane of the endocytosed virus particle with the endosomal membrane. Low pH in endosomes induces an irreversible conformational change in HA2, releasing the fusion hydrophobic peptide. Several trimers are required to form a competent fusion pore. The chain is Hemagglutinin from Influenza A virus (strain A/Swine/Iowa/15/1930 H1N1).